The primary structure comprises 205 residues: FMN reductase (NADH) RutF (205 aa).

Residues 171–205 (PRAPRSGSAPAEPARAARALGARPAEGPALALRSA) are disordered.

The protein belongs to the non-flavoprotein flavin reductase family. RutF subfamily.

The catalysed reaction is FMNH2 + NAD(+) = FMN + NADH + 2 H(+). Its function is as follows. Catalyzes the reduction of FMN to FMNH2 which is used to reduce pyrimidine by RutA via the Rut pathway. This chain is FMN reductase (NADH) RutF, found in Methylorubrum extorquens (strain DSM 6343 / CIP 106787 / DM4) (Methylobacterium extorquens).